The primary structure comprises 84 residues: UPF0297 protein Csac_1773 (84 aa).

This sequence belongs to the UPF0297 family.

The chain is UPF0297 protein Csac_1773 from Caldicellulosiruptor saccharolyticus (strain ATCC 43494 / DSM 8903 / Tp8T 6331).